Reading from the N-terminus, the 158-residue chain is Non-secretory ribonuclease (158 aa).

The first 27 residues, 1–27, serve as a signal peptide directing secretion; that stretch reads MVPKLFTSQICLLLLLGLSSLEVSLHA. C-linked (Man) tryptophan glycosylation is present at tryptophan 34. Histidine 42 acts as the Proton acceptor in catalysis. A 3'-nitrotyrosine modification is found at tyrosine 60. Residue 65-69 coordinates substrate; that stretch reads KNRNT. Residues asparagine 86, asparagine 92, and asparagine 111 are each glycosylated (N-linked (GlcNAc...) asparagine). The active-site Proton donor is the histidine 153.

The protein belongs to the pancreatic ribonuclease family. In terms of assembly, interacts with and forms a tight 1:1 complex with RNH1. Dimerization of two such complexes may occur.

It is found in the lysosome. Its subcellular location is the cytoplasmic granule. The enzyme catalyses an [RNA] containing cytidine + H2O = an [RNA]-3'-cytidine-3'-phosphate + a 5'-hydroxy-ribonucleotide-3'-[RNA].. It carries out the reaction an [RNA] containing uridine + H2O = an [RNA]-3'-uridine-3'-phosphate + a 5'-hydroxy-ribonucleotide-3'-[RNA].. This is a non-secretory ribonuclease. It is a pyrimidine specific nuclease with a slight preference for U. Cytotoxin and helminthotoxin. Possesses a wide variety of biological activities. The polypeptide is Non-secretory ribonuclease (RNASE2) (Saguinus labiatus (Red-chested mustached tamarin)).